Here is a 142-residue protein sequence, read N- to C-terminus: gSG7 salivary protein (142 aa).

The N-terminal stretch at 1 to 26 (MAARMTIMLPLAVALICLLQTEPGMA) is a signal peptide. 2 disulfides stabilise this stretch: cysteine 84/cysteine 139 and cysteine 107/cysteine 117.

The protein localises to the secreted. In terms of biological role, salivary protein that moderately inhibits the alternative pathway for complement system activation in the host. The sequence is that of gSG7 salivary protein from Anopheles darlingi (Mosquito).